A 445-amino-acid polypeptide reads, in one-letter code: DDB1- and CUL4-associated factor 13 (445 aa).

Lysine 49 is modified (N6-acetyllysine). WD repeat units follow at residues 64–104 (GHRD…CIRT), 107–146 (AHEGFVRGICTRFCGTSFFTVGDDKTVKQWKMDGPGYGDE), 149–191 (PLHT…PVCS), 194–234 (WGFD…PLKK), 236–276 (ILDM…TPVM), 280–319 (DHVSAVLDVDYSPTGKEFVSASFDKSIRIFPVDKSRSREV), and 323–362 (KRMQHVICVKWTSDSKYIMCGSDEMNIRLWKANASEKLGV). The segment at 353–441 (KANASEKLGV…IVSEKKKHVV (89 aa)) is required for nucleolar location.

Belongs to the WD repeat DCAF13/WDSOF1 family. In terms of assembly, part of the small subunit (SSU) processome, composed of more than 70 proteins and the RNA chaperone small nucleolar RNA (snoRNA) U3. Component of the DCX(DCAF13) E3 ubiquitin ligase complex, at least composed of CUL4 (CUL4A or CUL4B), DDB1, DCAF13 and RBX1. Interacts (via WD40 domain) with DDB1. Interacts with ESR1 and LATS1.

It is found in the nucleus. The protein resides in the nucleolus. It participates in protein modification; protein ubiquitination. Part of the small subunit (SSU) processome, first precursor of the small eukaryotic ribosomal subunit. During the assembly of the SSU processome in the nucleolus, many ribosome biogenesis factors, an RNA chaperone and ribosomal proteins associate with the nascent pre-rRNA and work in concert to generate RNA folding, modifications, rearrangements and cleavage as well as targeted degradation of pre-ribosomal RNA by the RNA exosome. Participates in the 18S rRNA processing in growing oocytes, being essential for oocyte nonsurrounded nucleolus (NSN) to surrounded nucleolus (SN) transition. Functionally, substrate-recognition component of a DCX (DDB1-CUL4-X-box) E3 ubiquitin-protein ligase complex that plays a key role in embryo preimplantation and is required for normal meiotic cycle progression in oocytes. Acts as a maternal factor that regulates oocyte and zygotic chromatin tightness during maternal to zygotic transition. Also involved in the transformation of the endometrium into the decidua, known as decidualization, providing a solid foundation for implantation of blastocysts. Recognizes the histone methyltransferases SUV39H1 and SUV39H2 and directs them to polyubiquitination and proteasomal degradation, which facilitates the H3K9me3 removal and early zygotic gene expression, essential steps for progressive genome reprogramming and the establishment of pluripotency during preimplantation embryonic development. Supports the spindle assembly and chromosome condensation during oocyte meiotic division by targeting the polyubiquitination and degradation of PTEN, a lipid phosphatase that inhibits PI3K pathway as well as oocyte growth and maturation. Targets PMP22 for polyubiquitination and proteasomal degradation. This chain is DDB1- and CUL4-associated factor 13 (DCAF13), found in Pongo abelii (Sumatran orangutan).